The following is a 219-amino-acid chain: Ribose-5-phosphate isomerase A (219 aa).

Substrate is bound by residues 28 to 31 (TGST), 81 to 84 (DGAD), and 94 to 97 (KGGG). The active-site Proton acceptor is the Glu103. Lys121 is a substrate binding site.

This sequence belongs to the ribose 5-phosphate isomerase family. In terms of assembly, homodimer.

It catalyses the reaction aldehydo-D-ribose 5-phosphate = D-ribulose 5-phosphate. The protein operates within carbohydrate degradation; pentose phosphate pathway; D-ribose 5-phosphate from D-ribulose 5-phosphate (non-oxidative stage): step 1/1. In terms of biological role, catalyzes the reversible conversion of ribose-5-phosphate to ribulose 5-phosphate. This chain is Ribose-5-phosphate isomerase A, found in Enterobacter cloacae.